Consider the following 393-residue polypeptide: Homeobox protein knotted-1-like 4 (393 aa).

Polar residues predominate over residues Met1 to Asp13. 2 disordered regions span residues Met1–Trp39 and Gln81–Glu114. One can recognise an ELK domain in the interval Glu286–Ile306. Residues Leu307–Asn370 constitute a DNA-binding region (homeobox; TALE-type). The interval Arg363–Arg393 is disordered. Positions His368–Ser377 are enriched in polar residues.

Belongs to the TALE/KNOX homeobox family. In terms of assembly, may form heterodimeric complex with the TALE/BELL proteins. Interacts with OFP1, OFP2, OFP4 and OFP12. Interacts with KNATM-B.

The protein localises to the nucleus. The protein is Homeobox protein knotted-1-like 4 (KNAT4) of Arabidopsis thaliana (Mouse-ear cress).